A 648-amino-acid chain; its full sequence is 1-deoxy-D-xylulose-5-phosphate synthase 1 (648 aa).

Thiamine diphosphate is bound by residues His-82 and 123–125 (AHS). Asp-154 is a Mg(2+) binding site. Thiamine diphosphate contacts are provided by residues 155-156 (GS), Asn-183, Tyr-292, and Glu-374. Asn-183 provides a ligand contact to Mg(2+).

Belongs to the transketolase family. DXPS subfamily. Homodimer. The cofactor is Mg(2+). Thiamine diphosphate serves as cofactor.

It catalyses the reaction D-glyceraldehyde 3-phosphate + pyruvate + H(+) = 1-deoxy-D-xylulose 5-phosphate + CO2. It participates in metabolic intermediate biosynthesis; 1-deoxy-D-xylulose 5-phosphate biosynthesis; 1-deoxy-D-xylulose 5-phosphate from D-glyceraldehyde 3-phosphate and pyruvate: step 1/1. In terms of biological role, catalyzes the acyloin condensation reaction between C atoms 2 and 3 of pyruvate and glyceraldehyde 3-phosphate to yield 1-deoxy-D-xylulose-5-phosphate (DXP). The protein is 1-deoxy-D-xylulose-5-phosphate synthase 1 of Cereibacter sphaeroides (strain ATCC 17023 / DSM 158 / JCM 6121 / CCUG 31486 / LMG 2827 / NBRC 12203 / NCIMB 8253 / ATH 2.4.1.) (Rhodobacter sphaeroides).